The sequence spans 299 residues: Ankyrin repeat domain-containing protein 54 (299 aa).

The tract at residues 1–32 (MAAAAGGADDESRSGRSSSDGECAVAPEPLTG) is disordered. Ala-2 bears the N-acetylalanine mark. A phosphoserine mark is found at Ser-57 and Ser-62. The Nuclear localization signal (NLS) signature appears at 98 to 116 (RRLGPTGKEVHALKRLRDS). ANK repeat units lie at residues 108-137 (HALKRLRDSANANDVETVQQLLEEGTDPCA), 141-170 (KGRTALHFASCNGNDQIVQLLLDHGADPNQ), 174-203 (LGNTPLHLAACTNHAPVITTLLRGGARVDA), and 207-239 (AGRTPLHLAKSKLNILQEGHSQCLEAVRLEVKQ). Residues 140–240 (DKGRTALHFA…EAVRLEVKQI (101 aa)) are LYN-binding. The short motif at 282–292 (LLASFTSLSLQ) is the Nuclear export signal (NES) element.

In terms of assembly, interacts (via ankyrin repeat region) with LYN (via SH3-domain) in an activation-independent status of LYN. Forms a multiprotein complex with LYN and HCLS1. Interacts with TSN2, VAV1, DBNL and LASP1.

It is found in the nucleus. Its subcellular location is the cytoplasm. It localises to the midbody. Plays an important role in regulating intracellular signaling events associated with erythroid terminal differentiation. This chain is Ankyrin repeat domain-containing protein 54 (ANKRD54), found in Bos taurus (Bovine).